The chain runs to 126 residues: Cystatin-C (126 aa).

Positions 1-18 are cleaved as a signal peptide; sequence MKMLVFPVLAALFAVGLG. Residues 22-115 form the Cystatin domain; it reads GAPRDINISE…CTFSVWSRPW (94 aa). The Secondary area of contact motif lies at 64–68; it reads QVVSG. Disulfide bonds link Cys-82/Cys-92 and Cys-106/Cys-126.

The protein belongs to the cystatin family. In terms of tissue distribution, ubiquitously expressed in normal tissues including brain, eye, gill, heart, gullet, liver, spleen, stomach, pyloric ceca, intestine, kidney and muscle. Expressed, but not up-regulated, in lipopolysaccharide (LPS)-stimulated tissues including kidney, spleen, muscle and gill.

It is found in the secreted. In terms of biological role, thiol protease inhibitor. Has high papain inhibitory activity and inhibits to a lesser extent fish cathepsins L, S, K, F, X and bovine cathepsin B in vitro. The sequence is that of Cystatin-C from Paralichthys olivaceus (Bastard halibut).